The chain runs to 436 residues: T-box transcription factor TBX6 (436 aa).

Positions 100-273 form a DNA-binding region, T-box; that stretch reads LWKEFSSVGT…ANPFAKGFRE (174 aa). The segment covering 274–284 has biased composition (basic and acidic residues); that stretch reads NGRNCKRERDA. Disordered regions lie at residues 274 to 339 and 360 to 379; these read NGRN…APAP and PSHLPTRSPSFPEAPDSGRS. A compositionally biased stretch (low complexity) spans 325-339; it reads EQAPAPGEATAAPAP.

Forms a dimeric complex with DNA (in vitro).

It localises to the nucleus. Its function is as follows. T-box transcription factor that plays an essential role in the determination of the fate of axial stem cells: neural vs mesodermal. Acts in part by down-regulating, a specific enhancer (N1) of SOX2, to inhibit neural development. Seems to play also an essential role in left/right axis determination and acts through effects on Notch signaling around the node as well as through an effect on the morphology and motility of the nodal cilia. The protein is T-box transcription factor TBX6 (TBX6) of Gorilla gorilla gorilla (Western lowland gorilla).